Reading from the N-terminus, the 231-residue chain is Cytochrome c oxidase subunit 2 (231 aa).

The Mitochondrial intermembrane segment spans residues 1 to 30 (MNNFFQGYNLLFQHSLFASYMDWFHAFNCS). A helical membrane pass occupies residues 31 to 51 (LLLGVLVFVTLLFGYLIFSTF). The Mitochondrial matrix segment spans residues 52–64 (YFKSKKIEYQFGE). The chain crosses the membrane as a helical span at residues 65–85 (LLCSIFPTIILLMQMVPSLSL). Over 86–231 (LYYYGLMNLD…FKSWCFGTME (146 aa)) the chain is Mitochondrial intermembrane. Cu cation contacts are provided by His164, Cys199, Glu201, Cys203, His207, and Met210. Glu201 is a Mg(2+) binding site.

Belongs to the cytochrome c oxidase subunit 2 family. Component of the cytochrome c oxidase (complex IV, CIV), a multisubunit enzyme composed of a catalytic core of 3 subunits and several supernumerary subunits. The complex exists as a monomer or a dimer and forms supercomplexes (SCs) in the inner mitochondrial membrane with ubiquinol-cytochrome c oxidoreductase (cytochrome b-c1 complex, complex III, CIII). Cu cation is required as a cofactor.

It localises to the mitochondrion inner membrane. It catalyses the reaction 4 Fe(II)-[cytochrome c] + O2 + 8 H(+)(in) = 4 Fe(III)-[cytochrome c] + 2 H2O + 4 H(+)(out). Component of the cytochrome c oxidase, the last enzyme in the mitochondrial electron transport chain which drives oxidative phosphorylation. The respiratory chain contains 3 multisubunit complexes succinate dehydrogenase (complex II, CII), ubiquinol-cytochrome c oxidoreductase (cytochrome b-c1 complex, complex III, CIII) and cytochrome c oxidase (complex IV, CIV), that cooperate to transfer electrons derived from NADH and succinate to molecular oxygen, creating an electrochemical gradient over the inner membrane that drives transmembrane transport and the ATP synthase. Cytochrome c oxidase is the component of the respiratory chain that catalyzes the reduction of oxygen to water. Electrons originating from reduced cytochrome c in the intermembrane space (IMS) are transferred via the dinuclear copper A center (CU(A)) of subunit 2 and heme A of subunit 1 to the active site in subunit 1, a binuclear center (BNC) formed by heme A3 and copper B (CU(B)). The BNC reduces molecular oxygen to 2 water molecules using 4 electrons from cytochrome c in the IMS and 4 protons from the mitochondrial matrix. This Caenorhabditis briggsae protein is Cytochrome c oxidase subunit 2 (cox-2).